Consider the following 1420-residue polypeptide: Mediator of RNA polymerase II transcription subunit 13 (1420 aa).

A phosphoserine mark is found at Ser370, Ser375, and Ser425. Residues 416–427 show a composition bias toward polar residues; the sequence is TTVSNDLENSPL. The interval 416–511 is disordered; the sequence is TTVSNDLENS…TNESNKSISD (96 aa). Residues 429–439 are compositionally biased toward basic and acidic residues; the sequence is TELEANGRSLE. A compositionally biased stretch (polar residues) spans 440–453; that stretch reads KVNNSVSKTGSVDT. Residues 454–484 show a composition bias toward basic and acidic residues; the sequence is LHNKEGTLEQREQNENLPSDKSDSMVDKELF. Over residues 494-508 the composition is skewed to low complexity; it reads GDSNKSNSTNESNKS. Phosphothreonine is present on Thr601. Ser608 bears the Phosphoserine; by PKA mark. Ser636 is subject to Phosphoserine. The disordered stretch occupies residues 653-691; that stretch reads LSSSEEEEDEEENGSSDEDLKSLNVRDDMKPSDNISTNT. Residues 655-669 show a composition bias toward acidic residues; the sequence is SSEEEEDEEENGSSD. The segment covering 670–683 has biased composition (basic and acidic residues); that stretch reads EDLKSLNVRDDMKP. At Ser748 the chain carries Phosphoserine.

Belongs to the Mediator complex subunit 13 family. As to quaternary structure, component of the SRB8-11 complex which consists of SRB8, SSN2/SRB9, SSN3/SRB10 and SSN8/SRB11. The SRB8-11 complex associates with the Mediator complex. The SSN3/SRB10 and SSN8/SRB11 kinase-cyclin pair also associate with the RNA polymerase II holoenzyme. Post-translationally, phosphorylated. PKA-dependent phosphorylation at 'Ser-608' is enhanced by activation of the RAS signaling pathway.

The protein localises to the nucleus. Its function is as follows. Component of the SRB8-11 complex. The SRB8-11 complex is a regulatory module of the Mediator complex which is itself involved in regulation of basal and activated RNA polymerase II-dependent transcription. The SRB8-11 complex may be involved in the transcriptional repression of a subset of genes regulated by Mediator. It may inhibit the association of the Mediator complex with RNA polymerase II to form the holoenzyme complex. The SRB8-11 complex phosphorylates the C-terminal domain (CTD) of the largest subunit of RNA polymerase II RPB1 at serines 2 and 5. The protein is Mediator of RNA polymerase II transcription subunit 13 (SSN2) of Saccharomyces cerevisiae (strain ATCC 204508 / S288c) (Baker's yeast).